The primary structure comprises 1035 residues: Enteropeptidase (1035 aa).

G2 carries N-myristoyl glycine lipidation. The Cytoplasmic portion of the chain corresponds to 2–18 (GSKRSVPSRHRSLTTYE). The chain crosses the membrane as a helical; Signal-anchor for type II membrane protein span at residues 19-47 (VMFAVLFVILVALCAGLIAVSWLSIQGSV). Residues 48-1035 (KDAAFGKSHE…FTEWIQSFLH (988 aa)) lie on the Extracellular side of the membrane. The region spanning 54 to 169 (KSHEARGTLK…NSIDITASLE (116 aa)) is the SEA domain. 4 N-linked (GlcNAc...) asparagine glycosylation sites follow: N116, N147, N170, and N194. In terms of domain architecture, LDL-receptor class A 1 spans 197 to 238 (IECPPDSRLCADALKCIAIDLFCDGELNCPDGSDEDNKTCAT). Intrachain disulfides connect C199-C212, C206-C225, C219-C236, and C240-C269. N-linked (GlcNAc...) asparagine glycosylation is found at N233, N263, N264, N404, N456, N486, N519, N550, and N646. The CUB 1 domain maps to 240-350 (CDGRFLLTGS…IGFKVTYTAF (111 aa)). The region spanning 358-520 (YEKINCNFED…ISLTYGICNV (163 aa)) is the MAM domain. C540 and C568 form a disulfide bridge. The region spanning 540–650 (CGGPHDLWEP…QGFKANFTTG (111 aa)) is the CUB 2 domain. In terms of domain architecture, LDL-receptor class A 2 spans 657 to 695 (EPCKEDNFQCKDGECIPLVNLCDGFPHCKDGSDEAHCVR). Cystine bridges form between C659-C671, C666-C684, and C678-C693. Residues 694-787 (VRLFNGTTDS…LILLQCNYKS (94 aa)) enclose the SRCR domain. Residues N698, N722, N741, and N762 are each glycosylated (N-linked (GlcNAc...) asparagine). 6 disulfides stabilise this stretch: C773/C783, C788/C912, C826/C842, C926/C993, C957/C972, and C983/C1011. The 235-residue stretch at 801–1035 (IVGGSDSREG…FTEWIQSFLH (235 aa)) folds into the Peptidase S1 domain. H841 (charge relay system) is an active-site residue. A glycan (N-linked (GlcNAc...) asparagine) is linked at N864. D892 acts as the Charge relay system in catalysis. N-linked (GlcNAc...) asparagine glycosylation is found at N903 and N965. S987 functions as the Charge relay system in the catalytic mechanism.

The protein belongs to the peptidase S1 family. As to quaternary structure, heterodimer of a catalytic (light) chain and a multidomain (heavy) chain linked by a disulfide bond. The chains are derived from a single precursor that is cleaved by a trypsin-like protease. As to expression, intestinal brush border.

It is found in the membrane. The catalysed reaction is Activation of trypsinogen by selective cleavage of 6-Lys-|-Ile-7 bond.. Responsible for initiating activation of pancreatic proteolytic proenzymes (trypsin, chymotrypsin and carboxypeptidase A). It catalyzes the conversion of trypsinogen to trypsin which in turn activates other proenzymes including chymotrypsinogen, procarboxypeptidases, and proelastases. In Bos taurus (Bovine), this protein is Enteropeptidase (TMPRSS15).